A 1042-amino-acid polypeptide reads, in one-letter code: MENAHTKTVEEVLGHFGVNESTGLSLEQVKKLKERWGSNELPAEEGKTLLELVIEQFEDLLVRILLLAACISFVLAWFEEGEETITAFVEPFVILLILVANAIVGVWQERNAENAIEALKEYEPEMGKVYRQDRKSVQRIKAKDIVPGDIVEIAVGDKVPADIRLTSIKSTTLRVDQSILTGESVSVIKHTDPVPDPRAVNQDKKNMLFSGTNIAAGKAMGVVVATGVNTEIGKIRDEMVATEQERTPLQQKLDEFGEQLSKVISLICIAVWIINIGHFNDPVHGGSWIRGAIYYFKIAVALAVAAIPEGLPAVITTCLALGTRRMAKKNAIVRSLPSVETLGCTSVICSDKTGTLTTNQMSVCRMFILDKVEGDTCSLNEFTITGSTYAPIGEVHKDDKPVKCHQYDGLVELATICALCNDSALDYNEAKGVYEKVGEATETALTCLVEKMNVFDTELKGLSKIERANACNSVIKQLMKKEFTLEFSRDRKSMSVYCTPNKPSRTSMSKMFVKGAPEGVIDRCTHIRVGSTKVPMTPGVKQKIMSVIREWGSGSDTLRCLALATHDNPMRREEMNLEDSANFIKYETNLTFVGCVGMLDPPRIEVASSVKLCRQAGIRVIMITGDNKGTAVAICRRIGIFGQDEDVTSKAFTGREFDELNPSAQREACLNARCFARVEPSHKSKIVEFLQSFDEITAMTGDGVNDAPALKKSEIGIAMGSGTAVAKTASEMVLADDNFSTIVAAVEEGRAIYNNMKQFIRYLISSNVGEVVCIFLTAALGFPEALIPVQLLWVNLVTDGLPATALGFNPPDLDIMNKPPRNPKEPLISGWLFFRYLAIGCYVGAATVGAAAWWFIAADGGPRVTFYQLSHFLQCKEDNPDFEGVDCAVFESPYPMTMALSVLVTIEMCNALNSLSENQSLLRMPPWENIWLVGSICLSMSLHFLILYVEPLPLIFQITPLNLTQWLMVLKISLPVILMDETLKFVARNYLEPGKECVQPATKSCSFSACTDGISWPFVLLIMPLVIWVYSTDTNFSDMFWS.

The Cytoplasmic portion of the chain corresponds to 1–48 (MENAHTKTVEEVLGHFGVNESTGLSLEQVKKLKERWGSNELPAEEGKT). At S38 the chain carries Phosphoserine. The chain crosses the membrane as a helical span at residues 49 to 69 (LLELVIEQFEDLLVRILLLAA). Residues 70 to 89 (CISFVLAWFEEGEETITAFV) are Lumenal-facing. Residues 90 to 110 (EPFVILLILVANAIVGVWQER) form a helical membrane-spanning segment. Over 111-253 (NAENAIEALK…QERTPLQQKL (143 aa)) the chain is Cytoplasmic. Residues 254–273 (DEFGEQLSKVISLICIAVWI) traverse the membrane as a helical segment. Residues 274–295 (INIGHFNDPVHGGSWIRGAIYY) are Lumenal-facing. A 3'-nitrotyrosine mark is found at Y294 and Y295. The chain crosses the membrane as a helical span at residues 296 to 313 (FKIAVALAVAAIPEGLPA). Residues V304, A305, I307, and E309 each coordinate Ca(2+). Residues 314–756 (VITTCLALGT…EEGRAIYNNM (443 aa)) lie on the Cytoplasmic side of the membrane. D351 (4-aspartylphosphate intermediate) is an active-site residue. Mg(2+)-binding residues include D351 and T353. T353 is an ATP binding site. T441 is modified (phosphothreonine). ATP contacts are provided by E442, R489, and K514. The residue at position 531 (S531) is a Phosphoserine. R559 lines the ATP pocket. The interval 575 to 594 (MNLEDSANFIKYETNLTFVG) is interaction with HAX1. S580 carries the phosphoserine modification. The ATP site is built by T624, G625, and D626. Position 663 is a phosphoserine (S663). 2 residues coordinate ATP: R677 and K683. D702 contacts Mg(2+). N705 is an ATP binding site. The helical transmembrane segment at 757 to 776 (KQFIRYLISSNVGEVVCIFL) threads the bilayer. Positions 767 and 770 each coordinate Ca(2+). At 777 to 786 (TAALGFPEAL) the chain is on the lumenal side. The chain crosses the membrane as a helical span at residues 787-807 (IPVQLLWVNLVTDGLPATALG). The interval 787 to 807 (IPVQLLWVNLVTDGLPATALG) is interaction with PLN. The interval 788 to 1042 (PVQLLWVNLV…DTNFSDMFWS (255 aa)) is interaction with TMEM64 and PDIA3. The Ca(2+) site is built by N795, T798, and D799. Residues 808 to 827 (FNPPDLDIMNKPPRNPKEPL) lie on the Cytoplasmic side of the membrane. Residues 828-850 (ISGWLFFRYLAIGCYVGAATVGA) form a helical membrane-spanning segment. The Lumenal portion of the chain corresponds to 851 to 896 (AAWWFIAADGGPRVTFYQLSHFLQCKEDNPDFEGVDCAVFESPYPM). C875 and C887 are oxidised to a cystine. Residues 897–916 (TMALSVLVTIEMCNALNSLS) form a helical membrane-spanning segment. E907 contacts Ca(2+). Topologically, residues 917–929 (ENQSLLRMPPWEN) are cytoplasmic. A helical membrane pass occupies residues 930–948 (IWLVGSICLSMSLHFLILY). An interaction with PLN region spans residues 931-942 (WLVGSICLSMSL). The Lumenal portion of the chain corresponds to 949 to 963 (VEPLPLIFQITPLNL). The helical transmembrane segment at 964-984 (TQWLMVLKISLPVILMDETLK) threads the bilayer. The Cytoplasmic portion of the chain corresponds to 985 to 1042 (FVARNYLEPGKECVQPATKSCSFSACTDGISWPFVLLIMPLVIWVYSTDTNFSDMFWS).

This sequence belongs to the cation transport ATPase (P-type) (TC 3.A.3) family. Type IIA subfamily. Interacts with sarcolipin (SLN); the interaction inhibits ATP2A2 Ca(2+) affinity. Interacts with phospholamban (PLN); the interaction inhibits ATP2A2 Ca(2+) affinity. Interacts with myoregulin (MRLN). Interacts with ARLN and ERLN; the interactions inhibit ATP2A2 Ca(2+) affinity. Interacts with STRIT1/DWORF; the interaction results in activation of ATP2A2. Interacts with the monomeric forms of SLN, PLN, ARLN, ERLN and STRI1/DWORF. Interacts with HAX1. Interacts with S100A8 and S100A9. Interacts with SLC35G1 and STIM1. Interacts with TMEM203. Interacts with TMEM64 and PDIA3. Interacts with TMX1. Interacts with TMX2. Interacts with VMP1; VMP1 competes with PLN and SLN to prevent them from forming an inhibitory complex with ATP2A2. Interacts with ULK1. Interacts with S100A1 in a Ca(2+)-dependent manner. Interacts with TUNAR. Interacts with FLVCR2; this interaction occurs in the absence of heme and promotes ATP2A2 proteasomal degradation; this complex is dissociated upon heme binding. Interacts with FNIP1. As to quaternary structure, interacts with TRAM2 (via C-terminus). It depends on Mg(2+) as a cofactor. Nitrated under oxidative stress. Nitration on the two tyrosine residues inhibits catalytic activity. In terms of processing, serotonylated on Gln residues by TGM2 in response to hypoxia, leading to its inactivation. In terms of tissue distribution, detected in heart left ventricle (at protein level). Isoform 2 is highly expressed in heart and slow twitch skeletal muscle. Isoform 1 is widely expressed.

Its subcellular location is the endoplasmic reticulum membrane. It localises to the sarcoplasmic reticulum membrane. It catalyses the reaction Ca(2+)(in) + ATP + H2O = Ca(2+)(out) + ADP + phosphate + H(+). Has different conformational states with differential Ca2+ affinity. The E1 conformational state (active form) shows high Ca(2+) affinity, while the E2 state exhibits low Ca(2+) affinity. Binding of ATP allosterically increases its affinity for subsequent binding of Ca2+. Reversibly inhibited by phospholamban (PLN) at low calcium concentrations. PLN inhibits ATP2A2 Ca(2+) affinity by disrupting its allosteric activation by ATP. Inhibited by sarcolipin (SLN) and myoregulin (MRLN). The inhibition is blocked by VMP1. Enhanced by STRIT1/DWORF; STRIT1 increases activity by displacing sarcolipin (SLN), phospholamban (PLN) and myoregulin (MRLN). Stabilizes SERCA2 in its E2 state. Its function is as follows. This magnesium-dependent enzyme catalyzes the hydrolysis of ATP coupled with the translocation of calcium from the cytosol to the sarcoplasmic reticulum lumen. Involved in autophagy in response to starvation. Upon interaction with VMP1 and activation, controls ER-isolation membrane contacts for autophagosome formation. Also modulates ER contacts with lipid droplets, mitochondria and endosomes. In coordination with FLVCR2 mediates heme-stimulated switching from mitochondrial ATP synthesis to thermogenesis. In terms of biological role, involved in the regulation of the contraction/relaxation cycle. Acts as a regulator of TNFSF11-mediated Ca(2+) signaling pathways via its interaction with TMEM64 which is critical for the TNFSF11-induced CREB1 activation and mitochondrial ROS generation necessary for proper osteoclast generation. Association between TMEM64 and SERCA2 in the ER leads to cytosolic Ca(2+) spiking for activation of NFATC1 and production of mitochondrial ROS, thereby triggering Ca(2+) signaling cascades that promote osteoclast differentiation and activation. This Sus scrofa (Pig) protein is Sarcoplasmic/endoplasmic reticulum calcium ATPase 2 (ATP2A2).